The primary structure comprises 60 residues: DNA-directed RNA polymerase subunit Rpo6 (60 aa).

The protein belongs to the archaeal Rpo6/eukaryotic RPB6 RNA polymerase subunit family. As to quaternary structure, part of the RNA polymerase complex.

The protein resides in the cytoplasm. The catalysed reaction is RNA(n) + a ribonucleoside 5'-triphosphate = RNA(n+1) + diphosphate. Functionally, DNA-dependent RNA polymerase (RNAP) catalyzes the transcription of DNA into RNA using the four ribonucleoside triphosphates as substrates. The polypeptide is DNA-directed RNA polymerase subunit Rpo6 (Halobacterium salinarum (strain ATCC 700922 / JCM 11081 / NRC-1) (Halobacterium halobium)).